Consider the following 689-residue polypeptide: MFERNQKTIFVLDHTRYFSIASEEYISMDFLKGKPSGDGGATGAAGNATGSGGSQFSKSLWTCACESSIEYCRVVWDLFPGKKHVRFIVSDTAAHIVNTWSPSTQNMSHVMNAMVMVGVPSRNLPTSSDYSVIHGLRAAIEALAEPTDEQLAAMADLGTDELSRIPNKGRVICITSARDNTSMKSLEDIFNTVLVQQNTLAAPPAKKGLIIDHCHLVILNIVPLGVESLVTNRSLLKISPLLDVEIHTVSAPDISYKLTHLILNHYDLASTTVTNIPMKEEQNANSSANYDVEILHSRRAHSITCGPDFSLPTSIKQGATYETVTLKWCTPRGCGSADLQPCLGQFLVTPVDVTSRPSSCLINFLLNGRSVLLEMPRKTGSKATSHMLSARGGEIFVHSLCITRSCMDEAPSITDGPGGRVSDYRTAELGQLIKMSRMVPLKVKDPSAPPLTRRLPRYFPLTTSSSILFHLQRHISWLSHFLHLLVKEDMDKQDEVRCQQHIHELYKSASRGDVLPFTHTNGARLKLSKAKDQYRLLYRELEQLIQLNATTMHHKNLLESLQSLRAAYGDAPLKSEPGASLLRSFTESPLSPERLEPISSVGASGSSNSNSLLKASKRRMSSCGQRSLLDIISSAERSQSNKRLDFSGRLCTPLGQVAKLYPDFGTKDKDAVTTGASITPNVKEESVRS.

Positions 521-550 (NGARLKLSKAKDQYRLLYRELEQLIQLNAT) form a coiled coil. 2 disordered regions span residues 591–619 (SPER…SKRR) and 665–689 (GTKD…SVRS). Residues 599 to 614 (SSVGASGSSNSNSLLK) show a composition bias toward low complexity. The short motif at 613–619 (LKASKRR) is the Nuclear localization signal (NLS) element.

It belongs to the Integrator subunit 13 family. In terms of assembly, belongs to the multiprotein complex Integrator, at least composed of IntS1, IntS2, IntS3, IntS4, omd/IntS5, IntS6, defl/IntS7, IntS8, IntS9, IntS10, IntS11, IntS12, asun/IntS13, IntS14 and IntS15. The core complex associates with protein phosphatase 2A subunits mts/PP2A and Pp2A-29B, to form the Integrator-PP2A (INTAC) complex. Post-translationally, phosphorylated.

The protein resides in the nucleus. It localises to the cytoplasm. Its subcellular location is the perinuclear region. Component of the integrator complex, a multiprotein complex that terminates RNA polymerase II (Pol II) transcription in the promoter-proximal region of genes. The integrator complex provides a quality checkpoint during transcription elongation by driving premature transcription termination of transcripts that are unfavorably configured for transcriptional elongation: the complex terminates transcription by (1) catalyzing dephosphorylation of the C-terminal domain (CTD) of Pol II subunit Polr2A/Rbp1 and Spt5, and (2) degrading the exiting nascent RNA transcript via endonuclease activity. The integrator complex is also involved in the 3'-end processing of the U7 snRNA, and also the spliceosomal snRNAs U1, U2, U4 and U5. The chain is Protein asunder (asun) from Drosophila sechellia (Fruit fly).